The primary structure comprises 78 residues: Large ribosomal subunit protein bL28 (78 aa).

The segment at 1-21 is disordered; that stretch reads MSRVCQVTGKKPMVGNNRSHA.

It belongs to the bacterial ribosomal protein bL28 family.

This Shewanella loihica (strain ATCC BAA-1088 / PV-4) protein is Large ribosomal subunit protein bL28.